We begin with the raw amino-acid sequence, 554 residues long: Kinesin-like protein 3 (554 aa).

Residues 3 to 325 form the Kinesin motor domain; it reads SIKVVCRIRP…LRFGHRAKSI (323 aa). ATP is bound by residues 84 to 91 and 233 to 240; these read GQTGSGKT and GSESVGKS. A coiled-coil region spans residues 446-473; the sequence is LSSTKQQLSDLMTALGDAQERYVELVKN.

Belongs to the TRAFAC class myosin-kinesin ATPase superfamily. Kinesin family.

It localises to the cytoplasm. Its subcellular location is the cytoskeleton. Cytoplasmic motor that could play a role in Golgi membrane recycling. The sequence is that of Kinesin-like protein 3 (klp3) from Schizosaccharomyces pombe (strain 972 / ATCC 24843) (Fission yeast).